The primary structure comprises 892 residues: Exo-beta-D-glucosaminidase (892 aa).

The N-terminal stretch at 1 to 18 (MLANAIAALLLGSGIASA) is a signal peptide. A propeptide spanning residues 19 to 28 (AGHGSPLTSK) is cleaved from the precursor. Residues asparagine 196, asparagine 336, and asparagine 440 are each glycosylated (N-linked (GlcNAc...) asparagine). Aspartate 464 serves as the catalytic Proton donor. Glutamate 539 acts as the Nucleophile in catalysis. Residues asparagine 557, asparagine 578, asparagine 689, and asparagine 825 are each glycosylated (N-linked (GlcNAc...) asparagine).

The protein belongs to the glycosyl hydrolase 2 family. As to quaternary structure, monomer.

The protein resides in the secreted. The protein localises to the extracellular space. It catalyses the reaction Hydrolysis of chitosan or chitosan oligosaccharides to remove successive D-glucosamine residues from the non-reducing termini.. Hydrolyzes chitosan and chitooligosaccharides with retention of anomeric configuration. Has no activity against beta-D-galactoside, beta-D-glucuronide, beta-D-mannoside, chitin, glycol chitosan, cellulose, N,N'-diacetylchitibiose and pNP-GlcNAc. The chain is Exo-beta-D-glucosaminidase from Hypocrea jecorina (Trichoderma reesei).